The following is a 168-amino-acid chain: Ribosome maturation factor RimP (168 aa).

It belongs to the RimP family.

It is found in the cytoplasm. Its function is as follows. Required for maturation of 30S ribosomal subunits. In Syntrophobacter fumaroxidans (strain DSM 10017 / MPOB), this protein is Ribosome maturation factor RimP.